Here is a 273-residue protein sequence, read N- to C-terminus: MVSTSNGSDPLTIGGRLFSCRLLTGTGKYPSINSMQSSIERSACEMVTVAVRRVQTGAAGHTGLMEAIDWSRIWMLPNTAGCTNAEEAIRVARLGRELAKLAGQEDNNFIKLEVIPDSRHLLPDPIGTLQAAEALVKEGFTVLPYINADPLLAQRLEEVGCATVMPLGSPIGSGQGLNNAANIALIIENATVPVVVDAGIGVPSEAAQAMEMGADAVLVNSAIALAGDPPSMAEAMGKAVIAGRMAYSSGRLPRRGQASASSPTTGLISGKDK.

The active-site Schiff-base intermediate with DXP is Lys-111. 1-deoxy-D-xylulose 5-phosphate is bound by residues Gly-172, 198–199 (AG), and 220–221 (NS). The interval 251-273 (RLPRRGQASASSPTTGLISGKDK) is disordered. Positions 258–267 (ASASSPTTGL) are enriched in polar residues.

It belongs to the ThiG family. In terms of assembly, homotetramer. Forms heterodimers with either ThiH or ThiS.

The protein localises to the cytoplasm. The enzyme catalyses [ThiS sulfur-carrier protein]-C-terminal-Gly-aminoethanethioate + 2-iminoacetate + 1-deoxy-D-xylulose 5-phosphate = [ThiS sulfur-carrier protein]-C-terminal Gly-Gly + 2-[(2R,5Z)-2-carboxy-4-methylthiazol-5(2H)-ylidene]ethyl phosphate + 2 H2O + H(+). It functions in the pathway cofactor biosynthesis; thiamine diphosphate biosynthesis. In terms of biological role, catalyzes the rearrangement of 1-deoxy-D-xylulose 5-phosphate (DXP) to produce the thiazole phosphate moiety of thiamine. Sulfur is provided by the thiocarboxylate moiety of the carrier protein ThiS. In vitro, sulfur can be provided by H(2)S. This chain is Thiazole synthase, found in Synechococcus sp. (strain CC9902).